We begin with the raw amino-acid sequence, 130 residues long: S-adenosylmethionine decarboxylase proenzyme (130 aa).

Residue Ser-78 is the Schiff-base intermediate with substrate; via pyruvic acid of the active site. Ser-78 is modified (pyruvic acid (Ser); by autocatalysis). The active-site Proton acceptor; for processing activity is His-83. Cys-98 acts as the Proton donor; for catalytic activity in catalysis.

This sequence belongs to the prokaryotic AdoMetDC family. Type 1 subfamily. In terms of assembly, heterotetramer of two alpha and two beta chains arranged as a dimer of alpha/beta heterodimers. The cofactor is pyruvate. Post-translationally, is synthesized initially as an inactive proenzyme. Formation of the active enzyme involves a self-maturation process in which the active site pyruvoyl group is generated from an internal serine residue via an autocatalytic post-translational modification. Two non-identical subunits are generated from the proenzyme in this reaction, and the pyruvate is formed at the N-terminus of the alpha chain, which is derived from the carboxyl end of the proenzyme. The post-translation cleavage follows an unusual pathway, termed non-hydrolytic serinolysis, in which the side chain hydroxyl group of the serine supplies its oxygen atom to form the C-terminus of the beta chain, while the remainder of the serine residue undergoes an oxidative deamination to produce ammonia and the pyruvoyl group blocking the N-terminus of the alpha chain.

The catalysed reaction is S-adenosyl-L-methionine + H(+) = S-adenosyl 3-(methylsulfanyl)propylamine + CO2. It functions in the pathway amine and polyamine biosynthesis; S-adenosylmethioninamine biosynthesis; S-adenosylmethioninamine from S-adenosyl-L-methionine: step 1/1. In terms of biological role, catalyzes the decarboxylation of S-adenosylmethionine to S-adenosylmethioninamine (dcAdoMet), the propylamine donor required for the synthesis of the polyamines spermine and spermidine from the diamine putrescine. The protein is S-adenosylmethionine decarboxylase proenzyme of Aeropyrum pernix (strain ATCC 700893 / DSM 11879 / JCM 9820 / NBRC 100138 / K1).